We begin with the raw amino-acid sequence, 529 residues long: Bifunctional purine biosynthesis protein PurH (529 aa).

An MGS-like domain is found at 1 to 148 (MQQRRPIRRA…KNHKDVAIVV (148 aa)).

Belongs to the PurH family.

The catalysed reaction is (6R)-10-formyltetrahydrofolate + 5-amino-1-(5-phospho-beta-D-ribosyl)imidazole-4-carboxamide = 5-formamido-1-(5-phospho-D-ribosyl)imidazole-4-carboxamide + (6S)-5,6,7,8-tetrahydrofolate. It carries out the reaction IMP + H2O = 5-formamido-1-(5-phospho-D-ribosyl)imidazole-4-carboxamide. It participates in purine metabolism; IMP biosynthesis via de novo pathway; 5-formamido-1-(5-phospho-D-ribosyl)imidazole-4-carboxamide from 5-amino-1-(5-phospho-D-ribosyl)imidazole-4-carboxamide (10-formyl THF route): step 1/1. Its pathway is purine metabolism; IMP biosynthesis via de novo pathway; IMP from 5-formamido-1-(5-phospho-D-ribosyl)imidazole-4-carboxamide: step 1/1. This is Bifunctional purine biosynthesis protein PurH from Yersinia enterocolitica serotype O:8 / biotype 1B (strain NCTC 13174 / 8081).